A 320-amino-acid chain; its full sequence is ATP-dependent 6-phosphofructokinase (320 aa).

ATP is bound at residue G12. ADP is bound by residues 22-26 (RSVVR) and 55-60 (RYSVSD). ATP-binding positions include 73–74 (RF) and 103–106 (GDGS). D104 is a binding site for Mg(2+). 126-128 (TID) is a substrate binding site. D128 (proton acceptor) is an active-site residue. R155 lines the ADP pocket. Substrate-binding positions include R163 and 170-172 (MGR). ADP-binding positions include 186 to 188 (GCE) and 214 to 216 (KKH). Residues E223, R244, and 250 to 253 (HIQR) contribute to the substrate site.

Belongs to the phosphofructokinase type A (PFKA) family. ATP-dependent PFK group I subfamily. Prokaryotic clade 'B1' sub-subfamily. In terms of assembly, homotetramer. Mg(2+) serves as cofactor.

The protein localises to the cytoplasm. It catalyses the reaction beta-D-fructose 6-phosphate + ATP = beta-D-fructose 1,6-bisphosphate + ADP + H(+). Its pathway is carbohydrate degradation; glycolysis; D-glyceraldehyde 3-phosphate and glycerone phosphate from D-glucose: step 3/4. Its activity is regulated as follows. Allosterically activated by ADP and other diphosphonucleosides, and allosterically inhibited by phosphoenolpyruvate. In terms of biological role, catalyzes the phosphorylation of D-fructose 6-phosphate to fructose 1,6-bisphosphate by ATP, the first committing step of glycolysis. The polypeptide is ATP-dependent 6-phosphofructokinase (Baumannia cicadellinicola subsp. Homalodisca coagulata).